The primary structure comprises 132 residues: MSTHDPISDLITRIRNAQMRSKSKVTTPGSKMRASVLEVLKSEGYIRGYATMEHPSGRSEIEIELKYFDGEPVIREIERVSKPGRRVYTSVKNLPRVNNGLGISVLSTPKGIMADHSARDANVGGEVLFTVF.

The protein belongs to the universal ribosomal protein uS8 family. As to quaternary structure, part of the 30S ribosomal subunit. Contacts proteins S5 and S12.

Its function is as follows. One of the primary rRNA binding proteins, it binds directly to 16S rRNA central domain where it helps coordinate assembly of the platform of the 30S subunit. In Bradyrhizobium sp. (strain ORS 278), this protein is Small ribosomal subunit protein uS8.